A 369-amino-acid chain; its full sequence is DNA replication and repair protein RecF (369 aa).

30 to 37 (GENAQGKT) provides a ligand contact to ATP.

It belongs to the RecF family.

It localises to the cytoplasm. Its function is as follows. The RecF protein is involved in DNA metabolism; it is required for DNA replication and normal SOS inducibility. RecF binds preferentially to single-stranded, linear DNA. It also seems to bind ATP. In Oceanobacillus iheyensis (strain DSM 14371 / CIP 107618 / JCM 11309 / KCTC 3954 / HTE831), this protein is DNA replication and repair protein RecF.